The following is an 86-amino-acid chain: Small ribosomal subunit protein bS20 (86 aa).

Residues 1 to 27 (MANSKSAKKRATQAERRRQHNASRRSM) are compositionally biased toward basic residues. A disordered region spans residues 1–28 (MANSKSAKKRATQAERRRQHNASRRSMM).

Belongs to the bacterial ribosomal protein bS20 family.

Its function is as follows. Binds directly to 16S ribosomal RNA. In Aliivibrio fischeri (strain MJ11) (Vibrio fischeri), this protein is Small ribosomal subunit protein bS20.